A 306-amino-acid chain; its full sequence is N-acetylmuramic acid 6-phosphate etherase (306 aa).

One can recognise an SIS domain in the interval 60–223 (TAAALRGGGR…STGAMVRLGK (164 aa)). Glu88 (proton donor) is an active-site residue. Glu119 is a catalytic residue.

This sequence belongs to the GCKR-like family. MurNAc-6-P etherase subfamily. Homodimer.

It catalyses the reaction N-acetyl-D-muramate 6-phosphate + H2O = N-acetyl-D-glucosamine 6-phosphate + (R)-lactate. The protein operates within amino-sugar metabolism; N-acetylmuramate degradation. In terms of biological role, specifically catalyzes the cleavage of the D-lactyl ether substituent of MurNAc 6-phosphate, producing GlcNAc 6-phosphate and D-lactate. This is N-acetylmuramic acid 6-phosphate etherase from Gloeobacter violaceus (strain ATCC 29082 / PCC 7421).